Here is a 424-residue protein sequence, read N- to C-terminus: Histidinol dehydrogenase homolog (424 aa).

2 residues coordinate Zn(2+): Gln-250 and His-253. Catalysis depends on proton acceptor residues Glu-318 and His-319. 2 residues coordinate Zn(2+): Asp-352 and His-411.

Belongs to the histidinol dehydrogenase family. It depends on Zn(2+) as a cofactor.

The protein is Histidinol dehydrogenase homolog of Shouchella clausii (strain KSM-K16) (Alkalihalobacillus clausii).